Consider the following 434-residue polypeptide: Mitochondrial distribution and morphology protein 10 (434 aa).

The protein belongs to the MDM10 family. In terms of assembly, component of the ER-mitochondria encounter structure (ERMES) or MDM complex, composed of mmm1, mdm10, mdm12 and mdm34. Associates with the mitochondrial outer membrane sorting assembly machinery SAM(core) complex.

The protein localises to the mitochondrion outer membrane. Its function is as follows. Component of the ERMES/MDM complex, which serves as a molecular tether to connect the endoplasmic reticulum and mitochondria. Components of this complex are involved in the control of mitochondrial shape and protein biogenesis and may function in phospholipid exchange. mdm10 is involved in the late assembly steps of the general translocase of the mitochondrial outer membrane (TOM complex). Functions in the tom40-specific route of the assembly of outer membrane beta-barrel proteins, including the association of tom40 with the receptor tom22 and small TOM proteins. Can associate with the SAM(core) complex as well as the mdm12-mmm1 complex, both involved in late steps of the major beta-barrel assembly pathway, that is responsible for biogenesis of all outer membrane beta-barrel proteins. May act as a switch that shuttles between both complexes and channels precursor proteins into the tom40-specific pathway. Plays a role in mitochondrial morphology and in the inheritance of mitochondria. The polypeptide is Mitochondrial distribution and morphology protein 10 (mdmB) (Aspergillus niger (strain ATCC MYA-4892 / CBS 513.88 / FGSC A1513)).